A 404-amino-acid chain; its full sequence is uncharacterized protein (404 aa).

Transmembrane regions (helical) follow at residues 35 to 55 (ILFSNIKSILAIIWKYSFTFL) and 92 to 112 (EDIWASTIILGVIIGYLISSI).

Its subcellular location is the membrane. This is an uncharacterized protein from Saccharomyces cerevisiae (strain ATCC 204508 / S288c) (Baker's yeast).